A 267-amino-acid polypeptide reads, in one-letter code: NAD kinase 2 (267 aa).

D52 functions as the Proton acceptor in the catalytic mechanism. Residues D52 to A53, N124 to E125, R151, D153, T164 to S169, and A188 contribute to the NAD(+) site.

It belongs to the NAD kinase family. Requires a divalent metal cation as cofactor.

The protein resides in the cytoplasm. The enzyme catalyses NAD(+) + ATP = ADP + NADP(+) + H(+). Functionally, involved in the regulation of the intracellular balance of NAD and NADP, and is a key enzyme in the biosynthesis of NADP. Catalyzes specifically the phosphorylation on 2'-hydroxyl of the adenosine moiety of NAD to yield NADP. The polypeptide is NAD kinase 2 (Bacillus anthracis).